A 568-amino-acid polypeptide reads, in one-letter code: Sulfite reductase [NADPH] hemoprotein beta-component (568 aa).

[4Fe-4S] cluster contacts are provided by cysteine 425, cysteine 431, cysteine 470, and cysteine 474. Siroheme is bound at residue cysteine 474.

This sequence belongs to the nitrite and sulfite reductase 4Fe-4S domain family. In terms of assembly, alpha(8)-beta(8). The alpha component is a flavoprotein, the beta component is a hemoprotein. It depends on siroheme as a cofactor. Requires [4Fe-4S] cluster as cofactor.

The catalysed reaction is hydrogen sulfide + 3 NADP(+) + 3 H2O = sulfite + 3 NADPH + 4 H(+). Its pathway is sulfur metabolism; hydrogen sulfide biosynthesis; hydrogen sulfide from sulfite (NADPH route): step 1/1. Functionally, component of the sulfite reductase complex that catalyzes the 6-electron reduction of sulfite to sulfide. This is one of several activities required for the biosynthesis of L-cysteine from sulfate. The chain is Sulfite reductase [NADPH] hemoprotein beta-component from Xanthomonas oryzae pv. oryzae (strain MAFF 311018).